Consider the following 1969-residue polypeptide: Hybrid signal transduction histidine kinase B (1969 aa).

Over residues 1-10 (MEKSEQTNSF) the composition is skewed to polar residues. Disordered stretches follow at residues 1-91 (MEKS…HETK), 218-335 (KINE…KTKQ), 412-436 (QQQQQHHRHYHHHINSGGSSGSSDK), 468-505 (NNINIQAPSTPVQSRNYPLFTTQSPKNANSASKSKNKL), and 551-598 (GSGG…YNNN). Residues 11-55 (ESSNNNNNNIDSNINNNLENNNNKNNNNNNNNNNNNNNNNNNIEN) are compositionally biased toward low complexity. Residues 56 to 65 (SIDKNNKEDN) show a composition bias toward basic and acidic residues. The span at 72 to 86 (SHRKHRTRLKSKKGN) shows a compositional bias: basic residues. A compositionally biased stretch (polar residues) spans 242-252 (TNSSILKSSEQ). Residues 280–292 (SSSSDEGSDNSKS) show a composition bias toward low complexity. Residues 293–304 (QHSSVNTPTLSR) show a composition bias toward polar residues. The segment covering 313-335 (SQQSQKQSQQQSQQPQQQNKTKQ) has biased composition (low complexity). A compositionally biased stretch (basic residues) spans 416-425 (QHHRHYHHHI). The span at 469–492 (NINIQAPSTPVQSRNYPLFTTQSP) shows a compositional bias: polar residues. Residues 551 to 571 (GSGGGGSGGGGGGGGGGGGIG) show a composition bias toward gly residues. The segment covering 574-598 (SSFLDDNNNLNNGENFKNSNSYNNN) has biased composition (low complexity). 5 consecutive transmembrane segments (helical) span residues 660–680 (AYILNFLNLVLFVVYLLSTIL), 684–704 (EWFIFAPGILLSVIYFFLGKI), 708–728 (MYLIAFLTISTAVAINITSII), 747–767 (LVMIMVPLLFPSIVYSIVILI), and 795–815 (FGELLRSIIIVFVILMFYTIL). The region spanning 967 to 1188 (TVSHELRTPI…TFSFTIPCGI (222 aa)) is the Histidine kinase domain. His-970 is modified (phosphohistidine; by autocatalysis). Disordered regions lie at residues 1359–1415 (ASKD…HQLI), 1521–1563 (GIAL…TTQS), 1617–1709 (NNNF…SSHS), and 1755–1832 (QKPQ…TAAA). Positions 1373–1398 (GDGGRSLSGGGGGVGSNGNGNGGGGL) are enriched in gly residues. Low complexity-rich tracts occupy residues 1399 to 1410 (DSNISPSELSSS) and 1527 to 1549 (SSSKSPSIPSSSSASASALSPNS). 2 stretches are compositionally biased toward polar residues: residues 1554–1563 (ELGNGKTTQS) and 1626–1665 (KPSTPTFLSNQPSPATSNSPQLLQSPTTSTTGSINLSPHR). Low complexity-rich tracts occupy residues 1755–1774 (QKPQQQQQKPTTTTTTTSTQ) and 1781–1821 (KTTT…TTTT). Positions 1840–1967 (KILLVEDNFV…DILIQMIKKH (128 aa)) constitute a Response regulatory domain. Asp-1889 carries the post-translational modification 4-aspartylphosphate.

The protein resides in the membrane. The catalysed reaction is ATP + protein L-histidine = ADP + protein N-phospho-L-histidine.. In terms of biological role, acts in the cytokinin signal transduction pathway that regulates spore germination. Required for the maintenance of spore dormancy. Does not appear to act as a cytokinin receptor. Probably undergoes ATP-dependent autophosphorylation at a conserved histidine residue in the kinase core, which is followed by transfer of the phosphoryl group to a conserved aspartate residue in the receiver domain. The sequence is that of Hybrid signal transduction histidine kinase B (dhkB) from Dictyostelium discoideum (Social amoeba).